Here is a 105-residue protein sequence, read N- to C-terminus: ATP-dependent Clp protease adapter protein ClpS (105 aa).

Belongs to the ClpS family. As to quaternary structure, binds to the N-terminal domain of the chaperone ClpA.

In terms of biological role, involved in the modulation of the specificity of the ClpAP-mediated ATP-dependent protein degradation. The sequence is that of ATP-dependent Clp protease adapter protein ClpS from Prochlorococcus marinus (strain MIT 9515).